A 1342-amino-acid polypeptide reads, in one-letter code: Restriction of telomere capping protein 1 (1342 aa).

The segment at 1–39 is disordered; that stretch reads MSLSPHVENASIPKGSTPIPKNRNVSSIGKGEFLGSSSS. 6 WD repeats span residues 207-248, 256-296, 305-342, 367-406, 439-486, and 489-527; these read NKFS…SIDN, EHTR…SKSS, TASD…YKFA, AHTG…NAAE, NTGY…IPKH, and LSET…TVLE. Disordered regions lie at residues 559 to 593, 600 to 619, 630 to 651, 736 to 766, and 788 to 831; these read PELQ…IGGI, TGLT…GPTF, ASSF…ENRE, KNAT…DDDD, and LMNE…DRSR. Residues 630–644 are compositionally biased toward low complexity; the sequence is ASSFNSSSASLTSLT. The span at 753 to 766 shows a compositional bias: acidic residues; sequence DDGDDDDDDDDDDD. Over residues 815-824 the composition is skewed to low complexity; it reads SSISSISASR. One copy of the WD 7 repeat lies at 844 to 884; that stretch reads KIQTLVDLISIATHNASVYLSIDDLTNFKIWILIRDSLLWD. Disordered regions lie at residues 942–962 and 1014–1043; these read AFRA…SKLK and DEHE…AKSI. 2 stretches are compositionally biased toward basic and acidic residues: residues 952-962 and 1016-1028; these read DAEKKPVSKLK and HEHQ…HDSP. Phosphoserine is present on residues S1037, S1081, S1088, S1090, S1124, and S1134. WD repeat units lie at residues 1130 to 1170 and 1217 to 1256; these read SRPD…KQLY and LFGI…LITN. The RING-type; degenerate zinc-finger motif lies at 1294–1336; that stretch reads CVLCERPLKKLTMVILPCGHEGHFQCIQEWFLDENEQECPGGC.

The protein belongs to the WD repeat RTC1 family.

It localises to the vacuole. May be involved in a process influencing telomere capping. The polypeptide is Restriction of telomere capping protein 1 (RTC1) (Saccharomyces cerevisiae (strain Lalvin EC1118 / Prise de mousse) (Baker's yeast)).